Reading from the N-terminus, the 409-residue chain is Proteasome-activating nucleotidase (409 aa).

The segment at 1-22 is disordered; the sequence is MTLSSAGGSRSHRHNGGHSERD. Residues 23–58 are a coiled coil; that stretch reads VEIRILKDKVRSLTKEKISLQKELEYYKNEITKLLS. Residues 183–188 and His322 each bind ATP; that span reads GTGKTL.

This sequence belongs to the AAA ATPase family. In terms of assembly, homohexamer. The hexameric complex has a two-ring architecture resembling a top hat that caps the 20S proteasome core at one or both ends. Upon ATP-binding, the C-terminus of PAN interacts with the alpha-rings of the proteasome core by binding to the intersubunit pockets.

The protein resides in the cytoplasm. In terms of biological role, ATPase which is responsible for recognizing, binding, unfolding and translocation of substrate proteins into the archaeal 20S proteasome core particle. Is essential for opening the gate of the 20S proteasome via an interaction with its C-terminus, thereby allowing substrate entry and access to the site of proteolysis. Thus, the C-termini of the proteasomal ATPase function like a 'key in a lock' to induce gate opening and therefore regulate proteolysis. Unfolding activity requires energy from ATP hydrolysis, whereas ATP binding alone promotes ATPase-20S proteasome association which triggers gate opening, and supports translocation of unfolded substrates. This Aeropyrum pernix (strain ATCC 700893 / DSM 11879 / JCM 9820 / NBRC 100138 / K1) protein is Proteasome-activating nucleotidase.